A 192-amino-acid chain; its full sequence is MQVDIGAILTGYAQGYFLMADEETGSLAWYGTEQHALIPLDERFHCPRSLRPLVRGSCFQVRINGAFEQVVEGCAARPQTWISSELKQIYLALHQAGFAHSFETWQGDTLAGGILGIALGAAFIGESMFYRIPNASKVALVKLVEHLRERGFRLFDAQLMNPHLARFGAFLMDGRDYQELLQQCLRIPCRFD.

Belongs to the L/F-transferase family.

The protein localises to the cytoplasm. It carries out the reaction N-terminal L-lysyl-[protein] + L-leucyl-tRNA(Leu) = N-terminal L-leucyl-L-lysyl-[protein] + tRNA(Leu) + H(+). The catalysed reaction is N-terminal L-arginyl-[protein] + L-leucyl-tRNA(Leu) = N-terminal L-leucyl-L-arginyl-[protein] + tRNA(Leu) + H(+). It catalyses the reaction L-phenylalanyl-tRNA(Phe) + an N-terminal L-alpha-aminoacyl-[protein] = an N-terminal L-phenylalanyl-L-alpha-aminoacyl-[protein] + tRNA(Phe). Its function is as follows. Functions in the N-end rule pathway of protein degradation where it conjugates Leu, Phe and, less efficiently, Met from aminoacyl-tRNAs to the N-termini of proteins containing an N-terminal arginine or lysine. The sequence is that of Leucyl/phenylalanyl-tRNA--protein transferase from Synechococcus sp. (strain JA-3-3Ab) (Cyanobacteria bacterium Yellowstone A-Prime).